Consider the following 944-residue polypeptide: Thyroid peroxidase (944 aa).

Positions 1 to 30 (MVGLVPAGSAWGGRALAVLGVTLLVALARG) are cleaved as a signal peptide. Over 31-858 (LLPFFLGGRD…SGRLPKASLV (828 aa)) the chain is Extracellular. N-linked (GlcNAc...) asparagine glycosylation occurs at Asn141. Cysteines 154 and 170 form a disulfide. Residue Asp250 coordinates heme b. The active-site Proton acceptor is His251. Residue Asp252 coordinates Ca(2+). Intrachain disulfides connect Cys271-Cys281 and Cys275-Cys295. Asn316 carries an N-linked (GlcNAc...) asparagine glycan. Thr330, Phe332, Asp334, and Ser336 together coordinate Ca(2+). Residue Asn351 is glycosylated (N-linked (GlcNAc...) asparagine). Residues Glu408 and His503 each contribute to the heme b site. Disulfide bonds link Cys606–Cys663, Cys704–Cys729, Cys750–Cys790, Cys776–Cys802, Cys808–Cys822, Cys816–Cys831, and Cys833–Cys846. A glycan (N-linked (GlcNAc...) asparagine) is linked at Asn623. The Sushi domain occupies 748–804 (DACGLPDSLDNGDVVLCGEAGRRVLVFSCRHGFKLQGPEQVACSPRGGAVRAPVCRD). Residues 804 to 847 (DINECEDASHPPCHGSARCRNTKGGFRCECTDPAVLGEDGTTCV) form the EGF-like; calcium-binding domain. The chain crosses the membrane as a helical span at residues 859–879 (SIALGIVLVVGLAGLTWTLVC). At 880–944 (RWAHAGRKAS…RSHVAQGSPA (65 aa)) the chain is on the cytoplasmic side. Residues 895–944 (LGGRGAPPPGRGAGQDGASGSLVPPLGPQGRTRAVDPTSSRSHVAQGSPA) form a disordered region. The segment covering 931 to 944 (PTSSRSHVAQGSPA) has biased composition (polar residues).

It belongs to the peroxidase family. XPO subfamily. As to quaternary structure, interacts with DUOX1, DUOX2 and CYBA. Requires Ca(2+) as cofactor. The cofactor is heme b. Post-translationally, heme is covalently bound through a H(2)O(2)-dependent autocatalytic process. Heme insertion is important for the delivery of protein at the cell surface. Cleaved in its N-terminal part.

It is found in the membrane. It carries out the reaction 2 iodide + H2O2 + 2 H(+) = diiodine + 2 H2O. The catalysed reaction is [thyroglobulin]-L-tyrosine + iodide + H2O2 + H(+) = [thyroglobulin]-3-iodo-L-tyrosine + 2 H2O. It catalyses the reaction [thyroglobulin]-3-iodo-L-tyrosine + iodide + H2O2 + H(+) = [thyroglobulin]-3,5-diiodo-L-tyrosine + 2 H2O. The enzyme catalyses 2 [thyroglobulin]-3,5-diiodo-L-tyrosine + H2O2 = [thyroglobulin]-L-thyroxine + [thyroglobulin]-dehydroalanine + 2 H2O. It carries out the reaction [thyroglobulin]-3-iodo-L-tyrosine + [thyroglobulin]-3,5-diiodo-L-tyrosine + H2O2 = [thyroglobulin]-3,3',5-triiodo-L-thyronine + [thyroglobulin]-dehydroalanine + 2 H2O. The protein operates within hormone biosynthesis; thyroid hormone biosynthesis. In terms of biological role, iodination and coupling of the hormonogenic tyrosines in thyroglobulin to yield the thyroid hormones T(3) and T(4). The chain is Thyroid peroxidase (TPO) from Canis lupus familiaris (Dog).